The primary structure comprises 540 residues: CTP synthase (540 aa).

The interval 1 to 264 is amidoligase domain; that stretch reads MQYIVVTGGV…ISYLSKLSGK (264 aa). CTP is bound at residue serine 12. UTP is bound at residue serine 12. Residue 13 to 18 participates in ATP binding; it reads GLGKGT. Residue tyrosine 53 coordinates L-glutamine. Aspartate 70 contacts ATP. The Mg(2+) site is built by aspartate 70 and glutamate 140. CTP is bound by residues 147–149, 185–190, and arginine 221; these read DIE and KTKPTQ. UTP contacts are provided by residues 185–190 and arginine 221; that span reads KTKPTQ. The region spanning 294-527 is the Glutamine amidotransferase type-1 domain; it reads YVDLHDAYIS…VQQALIYKKN (234 aa). Glycine 347 contributes to the L-glutamine binding site. Cysteine 374 (nucleophile; for glutamine hydrolysis) is an active-site residue. L-glutamine contacts are provided by residues 375–378, glutamate 398, and arginine 455; that span reads LGFQ. Active-site residues include histidine 500 and glutamate 502.

It belongs to the CTP synthase family. In terms of assembly, homotetramer.

The enzyme catalyses UTP + L-glutamine + ATP + H2O = CTP + L-glutamate + ADP + phosphate + 2 H(+). It catalyses the reaction L-glutamine + H2O = L-glutamate + NH4(+). It carries out the reaction UTP + NH4(+) + ATP = CTP + ADP + phosphate + 2 H(+). It participates in pyrimidine metabolism; CTP biosynthesis via de novo pathway; CTP from UDP: step 2/2. Its activity is regulated as follows. Allosterically activated by GTP, when glutamine is the substrate; GTP has no effect on the reaction when ammonia is the substrate. The allosteric effector GTP functions by stabilizing the protein conformation that binds the tetrahedral intermediate(s) formed during glutamine hydrolysis. Inhibited by the product CTP, via allosteric rather than competitive inhibition. Its function is as follows. Catalyzes the ATP-dependent amination of UTP to CTP with either L-glutamine or ammonia as the source of nitrogen. Regulates intracellular CTP levels through interactions with the four ribonucleotide triphosphates. The sequence is that of CTP synthase from Thermoplasma volcanium (strain ATCC 51530 / DSM 4299 / JCM 9571 / NBRC 15438 / GSS1).